The chain runs to 576 residues: Laccase-1 (576 aa).

The first 19 residues, 1–19 (MARTTFLVSVSLFVSAVLA), serve as a signal peptide directing secretion. Plastocyanin-like domains lie at 21–145 (TVEY…LVIY) and 157–304 (VDDE…LVYE). Residue Asn-41 is glycosylated (N-linked (GlcNAc...) asparagine). Cu cation-binding residues include His-82, His-84, His-127, and His-129. Cys-103 and Cys-562 form a disulfide bridge. N-linked (GlcNAc...) asparagine glycosylation is found at Asn-182, Asn-228, Asn-294, and Asn-368. Residues 376 to 576 (DESKLVPLEY…NWLKSNPGQL (201 aa)) enclose the Plastocyanin-like 3 domain. Residues His-471, His-474, His-476, His-523, Cys-524, His-525, and His-529 each coordinate Cu cation.

Belongs to the multicopper oxidase family. In terms of assembly, homodimer. The cofactor is Cu cation. In mycelia, at a lower level than LCC4.

It is found in the secreted. It catalyses the reaction 4 hydroquinone + O2 = 4 benzosemiquinone + 2 H2O. Its function is as follows. Lignin degradation and detoxification of lignin-derived products. This chain is Laccase-1 (LCC1), found in Thanatephorus cucumeris (Black scurf of potato).